A 363-amino-acid chain; its full sequence is Phosphoserine aminotransferase (363 aa).

Position 42 (Arg-42) interacts with L-glutamate. Residues 76–77 (GR), Trp-102, Thr-156, Asp-175, and Gln-198 each bind pyridoxal 5'-phosphate. At Lys-199 the chain carries N6-(pyridoxal phosphate)lysine. 240–241 (NT) contacts pyridoxal 5'-phosphate.

It belongs to the class-V pyridoxal-phosphate-dependent aminotransferase family. SerC subfamily. As to quaternary structure, homodimer. Requires pyridoxal 5'-phosphate as cofactor.

Its subcellular location is the cytoplasm. The enzyme catalyses O-phospho-L-serine + 2-oxoglutarate = 3-phosphooxypyruvate + L-glutamate. It catalyses the reaction 4-(phosphooxy)-L-threonine + 2-oxoglutarate = (R)-3-hydroxy-2-oxo-4-phosphooxybutanoate + L-glutamate. It participates in amino-acid biosynthesis; L-serine biosynthesis; L-serine from 3-phospho-D-glycerate: step 2/3. It functions in the pathway cofactor biosynthesis; pyridoxine 5'-phosphate biosynthesis; pyridoxine 5'-phosphate from D-erythrose 4-phosphate: step 3/5. Functionally, catalyzes the reversible conversion of 3-phosphohydroxypyruvate to phosphoserine and of 3-hydroxy-2-oxo-4-phosphonooxybutanoate to phosphohydroxythreonine. In Shewanella halifaxensis (strain HAW-EB4), this protein is Phosphoserine aminotransferase.